A 118-amino-acid chain; its full sequence is MARIKGGLNAKKKHNKVLKLAKGYRGARSKQYRVAKQSVMRALTSAFAGRKERKRQFRQLWIARINAAARMNGLSYSKFMYGLKLAEVSVNRKMLAELAVNDAEGFKALVEVAKSKLA.

This sequence belongs to the bacterial ribosomal protein bL20 family.

In terms of biological role, binds directly to 23S ribosomal RNA and is necessary for the in vitro assembly process of the 50S ribosomal subunit. It is not involved in the protein synthesizing functions of that subunit. This is Large ribosomal subunit protein bL20 from Lachnoclostridium phytofermentans (strain ATCC 700394 / DSM 18823 / ISDg) (Clostridium phytofermentans).